The following is a 236-amino-acid chain: Phosphoserine phosphatase (236 aa).

The Nucleophile role is filled by aspartate 30. Aspartate 30 and aspartate 32 together coordinate Mg(2+). The active-site Proton donor is the aspartate 32. Residues glutamate 39, arginine 76, 120–121, and lysine 169 contribute to the substrate site; that span reads SG. Mg(2+) is bound at residue aspartate 192. Residue asparagine 195 coordinates substrate.

It belongs to the HAD-like hydrolase superfamily. SerB family. It depends on Mg(2+) as a cofactor.

The enzyme catalyses O-phospho-L-serine + H2O = L-serine + phosphate. It carries out the reaction O-phospho-D-serine + H2O = D-serine + phosphate. Its pathway is amino-acid biosynthesis; L-serine biosynthesis; L-serine from 3-phospho-D-glycerate: step 3/3. This is Phosphoserine phosphatase from Polaromonas sp. (strain JS666 / ATCC BAA-500).